Reading from the N-terminus, the 101-residue chain is UPF0235 protein Mevan_0378 (101 aa).

Belongs to the UPF0235 family.

The protein is UPF0235 protein Mevan_0378 of Methanococcus vannielii (strain ATCC 35089 / DSM 1224 / JCM 13029 / OCM 148 / SB).